A 459-amino-acid chain; its full sequence is tRNA modification GTPase MnmE (459 aa).

(6S)-5-formyl-5,6,7,8-tetrahydrofolate contacts are provided by Arg23, Glu88, and Arg127. Residues 223–381 (GLNTVIIGKP…LKDTIENMFA (159 aa)) form the TrmE-type G domain. Asn233 is a K(+) binding site. Residues 233 to 238 (NVGKSS), 252 to 258 (TDIPGTT), and 277 to 280 (DTAG) each bind GTP. Ser237 is a binding site for Mg(2+). K(+) contacts are provided by Thr252, Ile254, and Thr257. Position 258 (Thr258) interacts with Mg(2+). Lys459 contributes to the (6S)-5-formyl-5,6,7,8-tetrahydrofolate binding site.

This sequence belongs to the TRAFAC class TrmE-Era-EngA-EngB-Septin-like GTPase superfamily. TrmE GTPase family. As to quaternary structure, homodimer. Heterotetramer of two MnmE and two MnmG subunits. Requires K(+) as cofactor.

The protein resides in the cytoplasm. In terms of biological role, exhibits a very high intrinsic GTPase hydrolysis rate. Involved in the addition of a carboxymethylaminomethyl (cmnm) group at the wobble position (U34) of certain tRNAs, forming tRNA-cmnm(5)s(2)U34. This is tRNA modification GTPase MnmE from Clostridium acetobutylicum (strain ATCC 824 / DSM 792 / JCM 1419 / IAM 19013 / LMG 5710 / NBRC 13948 / NRRL B-527 / VKM B-1787 / 2291 / W).